The following is a 610-amino-acid chain: MSDELRKRGTTPIANIRNFSIVAHIDHGKSTLADRLIQMTGGLSDREMAGKEQVLDSMDIERERGITIKAQTVRLNYHAKDGKDYIFNLMDTPGHVDFAYEVSRSLAACEGSLLVVDASQGVEAQTLANVYQALDNNHEIVPVLNKVDLPAAEPDKVKQQIEDVIGIDASDAVMISAKTGLGVPDVLEAIVTRLPPPQGDRDATLKALLVDSWYDVYLGVVVLVRIVDGVMKKNSRIRMMGTNAAYDVERVGFFTPKMQQVDELGPGEIGFITAAIKEVADTRVGDTITDDRKPITEMLPGFKPAIPVVFCGLFPVDADDFETLRTAMGKLRLNDASFSFEMETSAALGFGFRCGFLGLLHLEIIQERLSREFDLNLIATAPSVIYKMKLTDGGEIEIHNPIDMPDVVKIAEIAEPWIEATILTPDDYLGSVLKLCQERRGSQKELTYVGSRAMVRYDLPLNEVVFDFYDRLKSVSKGYASFDYHLTDYKVADLVKMQILVNGEPVDALSMLVHRTRAEGRGRAMVEKMKELIPPHMFQIPIQAAIGGKVIARETVRALRKDVTAKCYGGDITRKRKLLEKQKEGKKKMRQFGKVDIPQEAFIAALKVDG.

Residues 14–198 (ANIRNFSIVA…AIVTRLPPPQ (185 aa)) form the tr-type G domain. Residues 26-31 (DHGKST) and 145-148 (NKVD) contribute to the GTP site.

It belongs to the TRAFAC class translation factor GTPase superfamily. Classic translation factor GTPase family. LepA subfamily.

Its subcellular location is the cell inner membrane. The catalysed reaction is GTP + H2O = GDP + phosphate + H(+). Its function is as follows. Required for accurate and efficient protein synthesis under certain stress conditions. May act as a fidelity factor of the translation reaction, by catalyzing a one-codon backward translocation of tRNAs on improperly translocated ribosomes. Back-translocation proceeds from a post-translocation (POST) complex to a pre-translocation (PRE) complex, thus giving elongation factor G a second chance to translocate the tRNAs correctly. Binds to ribosomes in a GTP-dependent manner. The protein is Elongation factor 4 of Nitrobacter hamburgensis (strain DSM 10229 / NCIMB 13809 / X14).